Reading from the N-terminus, the 561-residue chain is MSDTARILGGPSASSSRDGGMELNSFTEVSQTNSRSHSTKEEEGQVDDQQRPAREEETGVLGGYKLVLVTIGLCFCIFCTSLDNTIVATAVPRITQQFHSLDDVGWYASAYLLTTCAVTLTFGRLYTFFPIKWVYLSALLIFELGSFICGITPSSLGLILGRAVAGLGGGGLLSGSLLIISQCVPSARRPAFSGFIMSIFAVASVIAPLMGGAFTDHVSWRWCFYINLPFGLVSAVVILFTFQHTKPVIQASLREKAVGLDPLGTATFLPGIVCLLLATQWGGAQYPWGDGRVVALFVLFGVLLVCFIGLQLWARERATVPPRLLRGRNIWGSALYGFCLNGAMFTFVYYLPIWFQAVQGASATESGIRNLPLVISNVVFAIISGVLVSMTGYLGPFMLLSAAMASISAGLLSTLQPSSGAGEWIGYQVLLGLSIGVGFQVPIFVVQTTLASTDIPTATALMTFIQLLGGAIFVSVAQNMFRNQLATDIRTVLPMLDPTAVINAGPTSLRGMYSGETLTTLVALYNDAVVHTFYLAIGLAAASFLAATVIQWRPLAKAVGE.

The segment at 1–55 (MSDTARILGGPSASSSRDGGMELNSFTEVSQTNSRSHSTKEEEGQVDDQQRPARE) is disordered. Positions 24–36 (NSFTEVSQTNSRS) are enriched in polar residues. Basic and acidic residues predominate over residues 38-55 (STKEEEGQVDDQQRPARE). Transmembrane regions (helical) follow at residues 59–79 (GVLG…CIFC), 103–123 (DVGW…LTFG), 128–148 (FFPI…GSFI), 164–184 (VAGL…SQCV), 194–214 (GFIM…GGAF), 222–242 (WCFY…LFTF), 257–277 (AVGL…CLLL), 293–313 (VVAL…LQLW), 335–355 (LYGF…PIWF), 378–398 (VVFA…GPFM), 425–445 (IGYQ…PIFV), 457–477 (TATA…VSVA), and 530–550 (VHTF…ATVI).

Belongs to the major facilitator superfamily. TCR/Tet family.

It is found in the cell membrane. Functionally, efflux pump; part of the gene cluster that mediates the biosynthesis of bifonsecin B, a dimeric gamma-naphthopyrone. This is Efflux pump bfoC from Aspergillus brasiliensis (strain CBS 101740 / IMI 381727 / IBT 21946).